The primary structure comprises 164 residues: Large ribosomal subunit protein uL10 (164 aa).

It belongs to the universal ribosomal protein uL10 family. Part of the ribosomal stalk of the 50S ribosomal subunit. The N-terminus interacts with L11 and the large rRNA to form the base of the stalk. The C-terminus forms an elongated spine to which L12 dimers bind in a sequential fashion forming a multimeric L10(L12)X complex.

Its function is as follows. Forms part of the ribosomal stalk, playing a central role in the interaction of the ribosome with GTP-bound translation factors. This chain is Large ribosomal subunit protein uL10 (rplJ), found in Helicobacter pylori (strain ATCC 700392 / 26695) (Campylobacter pylori).